The following is a 326-amino-acid chain: Gamma-resorcylate decarboxylase (326 aa).

Mn(2+)-binding residues include Glu8, His10, His164, and Asp287. The active site involves Asp287.

The protein belongs to the metallo-dependent hydrolases superfamily. ACMSD family. As to quaternary structure, homotetramer. It depends on Mn(2+) as a cofactor.

The enzyme catalyses 2,6-dihydroxybenzoate + H(+) = resorcinol + CO2. The catalysed reaction is 2,3-dihydroxybenzoate + H(+) = catechol + CO2. The protein operates within aromatic compound metabolism. Activity is inhibited by 2-nitroresorcinol (2-NR). Functionally, involved in the gamma-resorcylate (2,6-dihydroxybenzoate) catabolism. Catalyzes the reversible decarboxylation of gamma-resorcylate to resorcinol. Also catalyzes the decarboxylation of 2,3-dihydroxybenzoate to catechol, 2,4,6-trihydroxybenzoate to benzene-1,3,5-triol, and 2,6-dihydroxy-4-methylbenzoate to 5-methylbenzene-1,3-diol. This is Gamma-resorcylate decarboxylase from Polaromonas sp. (strain JS666 / ATCC BAA-500).